Consider the following 2217-residue polypeptide: MSTARFKRGNGQAGSLSNGYAVTAQQLLQAAKVDDIDAMMGFERYVPPQYNGRVDPDRLDQVPGRTGWLVNMHPTLISEEIASGGGSDYNPSAAGIAGVDFYFLDEEGGSFKSSITYDPYFFVTVTDDARLNDVEEFLKKYLETCLKDISTLKKEDLKLDNHLLGLQKSLIKLSFVNSNQLFEARKLLRPILAENESNKQQRNVFKHSNISNGNGMLSSNVNRFASSSVQDKKDAKQYIEDIREYDVPYHVRVSIDKDIRVGKWYKVTHEGFFVWPDKVAFADPVVLAFDIETTKAPLKFPEASVDQVMMISYMIDGDGFLITNREIISEDIEDFEYTPKPELQGHVTIFNEVDELAVLQRFFEHIRDVRPTVISTFNGDFFDWPFIEKRASVRGLDMFEEIGFAPDSEGEYKSSYCVHMDCFRWVKRDSYLPQGSQGLKAVTQAKLGYNPIELDPELMTPYAYERPQQLSEYSVSDAVATYYLYMKYVHPFIFSLCTIIPLNPDEVLRKGTGTLCEMLLMVQAYQGNILLPNKHTDPLERFYDGHLLESETYVGGHVESLEAGVFRSDLATEFKIDTSAIDELIEDLPHALKFAVEVENKAKMEDVTNFEEIKEQIKEQLLELKENNKRHEKPLIYHVDVASMYPNIMTTNRLQPDSIKTEKDCASCDFNRPGKSCARRLKWAWRGEFYPAKSDEYNMIKRALQNETFPNKNKFSKKPYLTFDELSYSEQVAHIKKRLTEYSKKVYHRIKVSEIVEREAIVCQRENPFYVNTVKSFRDRRYEFKGLAKKWKGKMSSIDRNDKHGKDEANKMVVLYDSLQLAHKVILNSFYGYVMRKGSRWYSMEMAGITCLTGATIIQMARALVERVGRPLELDTDGIWCILPKSFPENFFLKLENGKKLFVSYPCSMLNYRVHQKFTNHQYQELVDPVKHKYETHSENTIFFEVDGPYKAMILPTSKEEGKGIKKRYAVFNEDGSLAELKGFELKRRGELQLIKNFQSDIFKVFLDGKTLEECYASVAAVSNRWLDILDNKGSMLEDEDLVSLICENRSMSKSLKEYEGQKSTSITTAKRLGEFLGEDMVKDKGLQCKYIISSKPHGAPVTERAIPVAIFSSDINVKRSFLRRWTMDHSLDNFDIRTILDWGYYRERLASVIQKIITIPAALQNVPNPVPRVEHPDWLKRRIAVKEDKFKQSKLERFLSKSSQEPQNRRIKDIEELFHEDDDIKRIKLAKVTSRNKNKRNRDVQKNDEESLVLPATMPSMEEDYVSWLSYQKIKWKIQRRDRIRRTQLFGKSGETNSRSVLGSMIRKQAEMFANGSWEVLQYRDNYEAGAVDAYVIINGKVQVLKIYVPRTLYINFKTDSVPLKKIKNCEVERSNAILPNDARINNDSASPLFKLTLSEQVYLDELEDSGSVLNDESVLGIYESHISPAQKALMDLGTTISFKSKKVGSLGKSLQDGFHLKDLTSVGNDRYLSHFDLNVCYLLHIDTNIDYEFFVIFRSWENKLSIFVKKPSNNAQELLESTIIGIFKEQYHKRKDRITKFNKYINLSDNVDMNSNHYTDKKKLFKAINQEFAMIKEQKGQQVLLLMQSPFPSLIKKNIRYSTQIPIIELSMNILALPQLNWQNVMINKLCSYIISTSYWVSHLVSLSQHSNVPICNINLEKMDFVIDVIYARRLKLDNIILWWNEQSPLPDHGGMENDFDQNTSWIMNDLDFPNINVPDVYDNVVLEVSIENLVVNTILCSTLINEAEGSDLVDMNTVDVSDKPVGNNQGIVQDSFSHDALAVLKSLLKEWWDRALEKNITADLLVNSLVSWVYSTDSKLFDGSLRYHIHNLTKKSLFQLMNEFNELGSFIVSADRNRLLIKTNKISPETCYAYSHYMIKSIRSNPMFTYLDLNIERYWDLLIWMDKYNFSGLSCSQIEEREKQDYTAYSNWQIKYYLPRIYQSEFEDWAMIILDSMVKTKRAFLESSYGTQRATQIVTGLTPQSDTEDISPLSSFSKEIGKPLLQRVNKLFRNQREFILDPGFSEDYAFPILPGSHIKMDDPLLEFIKSLFQILLLSKSTTLEVRQLRKEVLKFLEIREFAKEAEFQNPSDSLVINGILCEYCSYVSDLDLCRDGLDGKFQCPRCDKSINDSLLQEHMIQNLAIEYQTYITQDLRCEKCHTVKRDLMSTNCNCSGNWVCTTKPEKLSNIVKIYKQVAEFYNYSLVKNALESLY.

4 residues coordinate Zn(2+): Cys-2104, Cys-2107, Cys-2126, and Cys-2129. The CysA-type zinc finger occupies Cys-2104–Cys-2129. Positions 2160, 2163, 2175, and 2177 each coordinate [4Fe-4S] cluster. The CysB motif signature appears at Cys-2160–Cys-2177.

The protein belongs to the DNA polymerase type-B family. As to quaternary structure, heterotetramer. Consists of 4 subunits: POL2, DPB2, DPB3 and DPB4. The cofactor is [4Fe-4S] cluster.

Its subcellular location is the nucleus. It catalyses the reaction DNA(n) + a 2'-deoxyribonucleoside 5'-triphosphate = DNA(n+1) + diphosphate. DNA polymerase II participates in chromosomal DNA replication. This is DNA polymerase epsilon catalytic subunit A (POL2) from Candida glabrata (strain ATCC 2001 / BCRC 20586 / JCM 3761 / NBRC 0622 / NRRL Y-65 / CBS 138) (Yeast).